Reading from the N-terminus, the 619-residue chain is Pentatricopeptide repeat-containing protein At3g22470, mitochondrial (619 aa).

A mitochondrion-targeting transit peptide spans 1–28; it reads MIQRLIPLNRKASNFTQILEKGTSLLHY. PPR repeat units follow at residues 69-103, 104-138, 139-173, 174-208, 209-243, 244-278, 279-313, 314-348, 349-383, 384-418, 419-453, 454-488, 489-523, 524-558, and 559-593; these read TPID…GIEH, DMYT…GYEP, DTIT…KQRP, DLVT…GFQP, DEVT…NIKA, SVVQ…GIKA, DVVT…NIIP, DVVT…GIAP, DTIT…GCEP, DIVT…GLIP, NTIT…GVPP, SVVT…RMTL, GIGI…GVKP, DVVT…GCTP, and DDFT…GFSA.

The protein belongs to the PPR family. P subfamily.

The protein localises to the mitochondrion. This chain is Pentatricopeptide repeat-containing protein At3g22470, mitochondrial, found in Arabidopsis thaliana (Mouse-ear cress).